A 177-amino-acid chain; its full sequence is Large ribosomal subunit protein uL6 (177 aa).

The protein belongs to the universal ribosomal protein uL6 family. Part of the 50S ribosomal subunit.

Functionally, this protein binds to the 23S rRNA, and is important in its secondary structure. It is located near the subunit interface in the base of the L7/L12 stalk, and near the tRNA binding site of the peptidyltransferase center. The polypeptide is Large ribosomal subunit protein uL6 (Methanococcoides burtonii (strain DSM 6242 / NBRC 107633 / OCM 468 / ACE-M)).